A 1332-amino-acid chain; its full sequence is Xanthine dehydrogenase/oxidase (1332 aa).

In terms of domain architecture, 2Fe-2S ferredoxin-type spans 4–91 (DELVFFVNGK…HVAVTTVEGI (88 aa)). [2Fe-2S] cluster-binding residues include C43, C48, C51, C73, C113, C116, C148, and C150. Residues 229-414 (FEGERVTWIQ…LSIEIPYSRE (186 aa)) enclose the FAD-binding PCMH-type domain. Residues 257–264 (LVVGNTEI), F337, 347–351 (SLGGN), D360, L404, and K422 contribute to the FAD site. C535 and C992 form a disulfide bridge. Mo-molybdopterin is bound by residues Q767 and F798. Residues E802 and R880 each coordinate substrate. R912 contacts Mo-molybdopterin. The substrate site is built by F914 and T1010. A1079 contacts Mo-molybdopterin. Catalysis depends on E1261, which acts as the Proton acceptor.

The protein belongs to the xanthine dehydrogenase family. As to quaternary structure, homodimer. Interacts with BTN1A1. [2Fe-2S] cluster serves as cofactor. Requires FAD as cofactor. Mo-molybdopterin is required as a cofactor. Subject to partial proteolysis; this alters the enzyme from the dehydrogenase form (D) to the oxidase form (O). In terms of processing, contains sulfhydryl groups that are easily oxidized (in vitro); this alters the enzyme from the dehydrogenase form (D) to the oxidase form (O). Detected in milk (at protein level).

It is found in the cytoplasm. Its subcellular location is the peroxisome. The protein resides in the secreted. It carries out the reaction xanthine + NAD(+) + H2O = urate + NADH + H(+). The enzyme catalyses hypoxanthine + NAD(+) + H2O = xanthine + NADH + H(+). The catalysed reaction is xanthine + O2 + H2O = urate + H2O2. Its activity is regulated as follows. Can be converted from the dehydrogenase form (D) to the oxidase form (O) irreversibly by proteolysis or reversibly through the oxidation of sulfhydryl groups. Key enzyme in purine degradation. Catalyzes the oxidation of hypoxanthine to xanthine. Catalyzes the oxidation of xanthine to uric acid. Contributes to the generation of reactive oxygen species. In Bos taurus (Bovine), this protein is Xanthine dehydrogenase/oxidase (XDH).